Consider the following 215-residue polypeptide: Cytochrome c biogenesis ATP-binding export protein CcmA (215 aa).

An ABC transporter domain is found at 3-211; it reads LTAEILAARR…KMTGFAGVDN (209 aa). 35–42 contacts ATP; it reads GKNGSGKS.

It belongs to the ABC transporter superfamily. CcmA exporter (TC 3.A.1.107) family. The complex is composed of two ATP-binding proteins (CcmA) and two transmembrane proteins (CcmB).

The protein localises to the cell inner membrane. The catalysed reaction is heme b(in) + ATP + H2O = heme b(out) + ADP + phosphate + H(+). Its function is as follows. Part of the ABC transporter complex CcmAB involved in the biogenesis of c-type cytochromes; once thought to export heme, this seems not to be the case, but its exact role is uncertain. Responsible for energy coupling to the transport system. This Rhizobium johnstonii (strain DSM 114642 / LMG 32736 / 3841) (Rhizobium leguminosarum bv. viciae) protein is Cytochrome c biogenesis ATP-binding export protein CcmA.